The chain runs to 779 residues: Protein zer-1 homolog (779 aa).

Ala2 is modified (N-acetylalanine). 3 LRR repeats span residues 226–245 (SLVLYNMDLSDDHIRVIVQL), 246–281 (HKLRSKILTCGPHLISSHLDISRDRLSSYYKFKLTR), and 291–315 (LGNLMSLDISGHMILENCSISKTDE). ARM repeat units lie at residues 440 to 480 (RSEQ…NFSI), 524 to 569 (DNDH…NITD), 571 to 613 (TPDN…NVAE), 615 to 656 (KELR…HIMF), and 727 to 769 (PDKY…HCSN).

Belongs to the zyg-11 family. In terms of assembly, interacts with the ELOC-ELOB/Elongin BC complex. Part of an E3 ubiquitin ligase complex including ZER1, CUL2 and Elongin BC.

Serves as substrate adapter subunit in the E3 ubiquitin ligase complex ZYG11B-CUL2-Elongin BC. Acts redudantly with ZYG11B to target substrates bearing N-terminal glycine degrons for proteasomal degradation. Involved in the clearance of proteolytic fragments generated by caspase cleavage during apoptosis since N-terminal glycine degrons are strongly enriched at caspase cleavage sites. Also important in the quality control of protein N-myristoylation in which N-terminal glycine degrons are conditionally exposed after a failure of N-myristoylation. The sequence is that of Protein zer-1 homolog from Mus musculus (Mouse).